The sequence spans 565 residues: Phosphatidylinositol 4-kinase gamma 4 (565 aa).

2 consecutive Ubiquitin-like domains span residues 32-104 (IVIF…LVVR) and 109-187 (RAIS…RPAK). One can recognise a PI3K/PI4K catalytic domain in the interval 257–542 (GYLPVMSTEG…AILPGTSEET (286 aa)). Residues 263-269 (STEGSGG) are G-loop. ATP contacts are provided by residues 264–270 (TEGSGGV) and Lys286. The interval 291–311 (EPMAKNNPRGLPLSTDGEGLK) is disordered. ATP is bound at residue 369-372 (QLFV). Positions 402 to 410 (ANADRHAGN) are catalytic loop. Residues 425–451 (PIDHGYCLPEKFEDCTFEWLYWPQARE) are activation loop. Residue Asp427 coordinates ATP.

This sequence belongs to the PI3/PI4-kinase family. Type II PI4K subfamily. In terms of assembly, interacts with FTIP1 and RPN10. As to expression, specifically expressed in the phloem including companion cells.

It localises to the nucleus. The protein resides in the endoplasmic reticulum. It carries out the reaction a 1,2-diacyl-sn-glycero-3-phospho-(1D-myo-inositol) + ATP = a 1,2-diacyl-sn-glycero-3-phospho-(1D-myo-inositol 4-phosphate) + ADP + H(+). Functionally, the phosphorylation of phosphatidylinositol (PI) to PI4P is the first committed step in the generation of phosphatidylinositol 4,5-bisphosphate (PIP2), a precursor of the second messenger inositol 1,4,5-trisphosphate (InsP3). Involved in the control of flowering under long day conditions by promoting degradation of FTIP1. Recruits FTIP1 for degradation by the 26S proteasome in leaves, which affects RFT1 transport to the shoot apical meristem (SAM). The sequence is that of Phosphatidylinositol 4-kinase gamma 4 from Oryza sativa subsp. japonica (Rice).